We begin with the raw amino-acid sequence, 484 residues long: Aspartyl aminopeptidase (484 aa).

At Met-1 the chain carries N-acetylmethionine. Zn(2+) is bound at residue His-84. His-159 lines the substrate pocket. Low complexity predominate over residues 188 to 206; it reads PVESKSTTTTTTTESPKTS. Residues 188–213 form a disordered region; it reads PVESKSTTTTTTTESPKTSDPQDVNS. Residue Asp-266 participates in Zn(2+) binding. Glu-301 serves as a coordination point for substrate. Glu-302 and Asp-354 together coordinate Zn(2+). Substrate-binding residues include Asp-354, His-357, Lys-382, and Tyr-389. His-448 is a binding site for Zn(2+).

This sequence belongs to the peptidase M18 family. As to quaternary structure, tetrahedron-shaped homododecamer built from six homodimers. Requires Zn(2+) as cofactor.

It localises to the cytoplasm. The catalysed reaction is Release of an N-terminal aspartate or glutamate from a peptide, with a preference for aspartate.. Its function is as follows. Likely to play an important role in intracellular protein and peptide metabolism. This chain is Aspartyl aminopeptidase (dnpep), found in Dictyostelium discoideum (Social amoeba).